Here is a 128-residue protein sequence, read N- to C-terminus: Nanos homolog 1 (128 aa).

An essential for its translational repressor activity region spans residues 7–23 (FNSWSDYLGLSSLISRG). The interval 23-58 (GLQPREGGESPRPRWKASSPTPAEPLPSKAAEAHGH) is disordered. The Nanos-type zinc-finger motif lies at 60–114 (GCGFCRSNREAQSLYSSHRLRAPDGRVLCPVLRGYTCPLCGANGDWAHTMRYCPL). Residues C61, C64, H77, C88, C96, C99, H107, and C112 each contribute to the Zn(2+) site. 2 consecutive short sequence motifs (C2HC) follow at residues 61–88 (CGFC…RVLC) and 96–112 (CPLC…MRYC).

Belongs to the nanos family. As to quaternary structure, interacts with ccnb1.

It localises to the cytoplasm. Its subcellular location is the perinuclear region. In terms of biological role, acts as a translational repressor. Can mediate repression affecting different steps in the translation process: cap-driven, IRES-driven, polyadenylated RNAs or nonpolyadenylated RNAs. Essential for the development of primordial germ cells (PGCs) by ensuring their proper migration and survival. The chain is Nanos homolog 1 (nanos1) from Xenopus tropicalis (Western clawed frog).